A 257-amino-acid polypeptide reads, in one-letter code: Major prion protein (257 aa).

Residues 1 to 24 (MVKSHIGGWILLLFVATWSDVGLC) form the signal peptide. Positions 25-234 (KKRPKPGGWN…ESEAYYQRGA (210 aa)) are interaction with GRB2, ERI3 and SYN1. The segment at 28-110 (PKPGGWNTGG…GQWGKPNKPK (83 aa)) is disordered. 2 stretches are compositionally biased toward gly residues: residues 33-48 (WNTG…GSPG) and 55-101 (QGGG…GSHG). Tandem repeats lie at residues 54 to 62 (PQGGGGWGQ), 63 to 70 (PHGGGWGQ), 71 to 78 (PHGGGWGQ), 79 to 86 (PHGGGWGQ), and 87 to 95 (PHGGGGWGQ). A 5 X 8 AA tandem repeats of P-H-G-G-G-W-G-Q region spans residues 54 to 95 (PQGGGGWGQPHGGGWGQPHGGGWGQPHGGGWGQPHGGGGWGQ). The Cu(2+) site is built by H64, G65, G66, H72, G73, G74, H80, G81, G82, H88, G90, and G91. An intrachain disulfide couples C183 to C218. N185 and N201 each carry an N-linked (GlcNAc...) asparagine glycan. A234 carries GPI-anchor amidated alanine lipidation. Residues 235–257 (SAILFSPPPVILLISLLILLIVG) constitute a propeptide, removed in mature form.

Belongs to the prion family. In terms of assembly, monomer and homodimer. Has a tendency to aggregate into amyloid fibrils containing a cross-beta spine, formed by a steric zipper of superposed beta-strands. Soluble oligomers may represent an intermediate stage on the path to fibril formation. Copper binding may promote oligomerization. Interacts with GRB2, APP, ERI3/PRNPIP and SYN1. Mislocalized cytosolically exposed PrP interacts with MGRN1; this interaction alters MGRN1 subcellular location and causes lysosomal enlargement. Interacts with KIAA1191.

The protein resides in the cell membrane. It localises to the golgi apparatus. Functionally, its primary physiological function is unclear. Has cytoprotective activity against internal or environmental stresses. May play a role in neuronal development and synaptic plasticity. May be required for neuronal myelin sheath maintenance. May play a role in iron uptake and iron homeostasis. Soluble oligomers are toxic to cultured neuroblastoma cells and induce apoptosis (in vitro). Association with GPC1 (via its heparan sulfate chains) targets PRNP to lipid rafts. Also provides Cu(2+) or Zn(2+) for the ascorbate-mediated GPC1 deaminase degradation of its heparan sulfate side chains. The sequence is that of Major prion protein from Vulpes lagopus (Arctic fox).